A 701-amino-acid polypeptide reads, in one-letter code: Elongation factor G (701 aa).

A tr-type G domain is found at 11–287 (TKVRNIGIMA…AVIDYLPSPL (277 aa)). Residues 20-27 (AHIDAGKT), 84-88 (DTPGH), and 138-141 (NKMD) each bind GTP.

It belongs to the TRAFAC class translation factor GTPase superfamily. Classic translation factor GTPase family. EF-G/EF-2 subfamily.

Its subcellular location is the cytoplasm. Catalyzes the GTP-dependent ribosomal translocation step during translation elongation. During this step, the ribosome changes from the pre-translocational (PRE) to the post-translocational (POST) state as the newly formed A-site-bound peptidyl-tRNA and P-site-bound deacylated tRNA move to the P and E sites, respectively. Catalyzes the coordinated movement of the two tRNA molecules, the mRNA and conformational changes in the ribosome. The chain is Elongation factor G from Mycobacterium leprae (strain Br4923).